The chain runs to 435 residues: D-amino acid dehydrogenase (435 aa).

FAD is bound at residue 3–17 (VLILGSGVIGTTSAW).

Belongs to the DadA oxidoreductase family. The cofactor is FAD.

The catalysed reaction is a D-alpha-amino acid + A + H2O = a 2-oxocarboxylate + AH2 + NH4(+). Its pathway is amino-acid degradation; D-alanine degradation; NH(3) and pyruvate from D-alanine: step 1/1. Its function is as follows. Oxidative deamination of D-amino acids. This chain is D-amino acid dehydrogenase, found in Xylella fastidiosa (strain 9a5c).